Reading from the N-terminus, the 256-residue chain is DNA repair protein RecO (256 aa).

The protein belongs to the RecO family.

In terms of biological role, involved in DNA repair and RecF pathway recombination. The sequence is that of DNA repair protein RecO from Streptococcus pneumoniae serotype 19F (strain G54).